A 631-amino-acid chain; its full sequence is Peptide-N(4)-(N-acetyl-beta-glucosaminyl)asparagine amidase (631 aa).

The PUB domain maps to 34-97 (EAVRILLVLL…PSSNAYTLPT (64 aa)). S126 is subject to Phosphoserine. C246, C249, C272, and C273 together coordinate Zn(2+). C296 acts as the Nucleophile in catalysis. Residues H323 and D340 contribute to the active site. The region spanning 441 to 631 (ELKGRSSGSL…YPFDLQVQLH (191 aa)) is the PAW domain.

Belongs to the transglutaminase-like superfamily. PNGase family. The cofactor is Zn(2+).

It localises to the cytoplasm. It catalyses the reaction Hydrolysis of an N(4)-(acetyl-beta-D-glucosaminyl)asparagine residue in which the glucosamine residue may be further glycosylated, to yield a (substituted) N-acetyl-beta-D-glucosaminylamine and a peptide containing an aspartate residue.. Specifically deglycosylates the denatured form of N-linked glycoproteins in the cytoplasm and assists their proteasome-mediated degradation. Cleaves the beta-aspartyl-glucosamine (GlcNAc) of the glycan and the amide side chain of Asn, converting Asn to Asp. Prefers proteins containing high-mannose over those bearing complex type oligosaccharides. Can recognize misfolded proteins in the endoplasmic reticulum that are exported to the cytosol to be destroyed and deglycosylate them, while it has no activity toward native proteins. Deglycosylation is a prerequisite for subsequent proteasome-mediated degradation of some, but not all, misfolded glycoproteins. In Drosophila melanogaster (Fruit fly), this protein is Peptide-N(4)-(N-acetyl-beta-glucosaminyl)asparagine amidase (Pngl).